The chain runs to 285 residues: GPN-loop GTPase 3 (285 aa).

Residue Gly-13–Thr-18 participates in GTP binding. A Gly-Pro-Asn (GPN)-loop; involved in dimer interface motif is present at residues Gly-72 to Asn-74. Thr-174 to Asp-177 lines the GTP pocket. The disordered stretch occupies residues Glu-262–Ser-285.

The protein belongs to the GPN-loop GTPase family. Heterodimer with gpn1. Binds to RNA polymerase II (RNAPII).

Its function is as follows. Small GTPase required for proper localization of RNA polymerase II (RNAPII). May act at an RNAP assembly step prior to nuclear import. In Danio rerio (Zebrafish), this protein is GPN-loop GTPase 3.